A 154-amino-acid polypeptide reads, in one-letter code: Cytochrome c-type biogenesis protein CcmE (154 aa).

At 1–8 the chain is on the cytoplasmic side; that stretch reads MHPQRKQR. A helical; Signal-anchor for type II membrane protein transmembrane segment spans residues 9–29; it reads LMIVLFIVVFSSLAVGLIAYA. At 30-154 the chain is on the periplasmic side; the sequence is LRENINLFYP…ATCGGLNYGA (125 aa). Histidine 124 and tyrosine 128 together coordinate heme.

It belongs to the CcmE/CycJ family.

It is found in the cell inner membrane. Its function is as follows. Heme chaperone required for the biogenesis of c-type cytochromes. Transiently binds heme delivered by CcmC and transfers the heme to apo-cytochromes in a process facilitated by CcmF and CcmH. This chain is Cytochrome c-type biogenesis protein CcmE, found in Cellvibrio japonicus (strain Ueda107) (Pseudomonas fluorescens subsp. cellulosa).